The primary structure comprises 105 residues: dATP/dGTP diphosphohydrolase (105 aa).

It belongs to the Caudovirales dATP/dGTP diphosphohydrolase family. Requires Co(2+) as cofactor.

It carries out the reaction dGTP + H2O = dGMP + diphosphate + H(+). The catalysed reaction is dATP + H2O = dAMP + diphosphate + H(+). Its pathway is purine metabolism. Functionally, catalyzes the hydrolysis of dGTP into dGMP, which is needed among other for the first step of biosynthesis of dZTP (2-amino-2'-deoxyadenosine-5'-triphosphate). In Cyanophage S-2L (Cyanobacteria phage S-2L), this protein is dATP/dGTP diphosphohydrolase.